Here is a 364-residue protein sequence, read N- to C-terminus: Phosphoserine aminotransferase (364 aa).

R41 contributes to the L-glutamate binding site. Pyridoxal 5'-phosphate is bound by residues 75–76 (AS), W100, T155, D175, and Q198. K199 carries the post-translational modification N6-(pyridoxal phosphate)lysine. Pyridoxal 5'-phosphate is bound at residue 239–240 (NT).

It belongs to the class-V pyridoxal-phosphate-dependent aminotransferase family. SerC subfamily. In terms of assembly, homodimer. It depends on pyridoxal 5'-phosphate as a cofactor.

The protein localises to the cytoplasm. It carries out the reaction O-phospho-L-serine + 2-oxoglutarate = 3-phosphooxypyruvate + L-glutamate. The enzyme catalyses 4-(phosphooxy)-L-threonine + 2-oxoglutarate = (R)-3-hydroxy-2-oxo-4-phosphooxybutanoate + L-glutamate. It functions in the pathway amino-acid biosynthesis; L-serine biosynthesis; L-serine from 3-phospho-D-glycerate: step 2/3. Catalyzes the reversible conversion of 3-phosphohydroxypyruvate to phosphoserine and of 3-hydroxy-2-oxo-4-phosphonooxybutanoate to phosphohydroxythreonine. This Streptococcus uberis (strain ATCC BAA-854 / 0140J) protein is Phosphoserine aminotransferase.